The chain runs to 1464 residues: Collagen alpha-1(III) chain (1464 aa).

The signal sequence occupies residues 1 to 23 (MMSFVQSGTWFLLTLLHPTLILA). Positions 24 to 154 (QQSNVDELGC…CPTGGQNYSP (131 aa)) are cleaved as a propeptide — N-terminal propeptide. In terms of domain architecture, VWFC spans 31-90 (LGCSHLGQSYESRDVWKPEPCQICVCDSGSVLCDDIICDEEPLDCPNPEIPFGECCAICP). The interval 97 to 1195 (PVLPDGHGPQ…PGPPGAPGPC (1099 aa)) is disordered. The span at 100 to 109 (PDGHGPQGPK) shows a compositional bias: low complexity. A compositionally biased stretch (polar residues) spans 147–156 (TGGQNYSPQF). Residues 155–169 (QFDSYDVKSGVGGMG) form a nonhelical region (N-terminal) region. The span at 164–173 (GVGGMGGYPG) shows a compositional bias: gly residues. Residues 170–1195 (GYPGPAGPPG…PGPPGAPGPC (1026 aa)) are triple-helical region. Residues 174-184 (PAGPPGPPGPP) show a composition bias toward pro residues. The span at 186–198 (SSGHPGSPGSPGY) shows a compositional bias: low complexity. Basic and acidic residues predominate over residues 228 to 240 (KDGESGRPGRPGE). A 5-hydroxylysine; alternate modification is found at Lys-262. O-linked (Gal...) hydroxylysine; alternate glycosylation occurs at Lys-262. Basic and acidic residues predominate over residues 265-276 (RGFDGRNGEKGE). Lys-283 carries the post-translational modification 5-hydroxylysine. 2 stretches are compositionally biased toward low complexity: residues 310 to 321 (PGLPGAAGARGN) and 354 to 379 (PAGS…AGAQ). Positions 389-398 (GSPGGKGEMG) are enriched in gly residues. A compositionally biased stretch (low complexity) spans 399–412 (PAGIPGAPGLIGAR). Residues 527–548 (GTPGGPGIRGMPGSPGGPGNDG) are compositionally biased toward gly residues. The span at 606–615 (PAGKNGETGP) shows a compositional bias: low complexity. Gly residues-rich tracts occupy residues 641 to 650 (GIPGTGGPPG) and 668 to 677 (GAPGGKGDSG). Low complexity predominate over residues 678 to 691 (APGERGPPGTAGIP). A compositionally biased stretch (gly residues) spans 692-708 (GARGGAGPPGPEGGKGP). The segment covering 717 to 727 (ASGSPGLQGMP) has biased composition (low complexity). Basic and acidic residues predominate over residues 822-834 (AKGERGAPGEKGE). At Lys-859 the chain carries 5-hydroxylysine. Gly residues predominate over residues 863 to 879 (GSPGGPGTAGFPGGRGL). A compositionally biased stretch (pro residues) spans 889 to 906 (PGPPGPSGAPGKDGPPGP). Low complexity-rich tracts occupy residues 907 to 934 (AGNS…KGPP) and 945 to 960 (PLGI…LAGP). 5-hydroxylysine is present on Lys-976. Residues 1045 to 1054 (PGHPGPPGPV) are compositionally biased toward pro residues. Residues 1068–1084 (PAGPSGAPGPAGARGAP) are compositionally biased toward low complexity. 2 positions are modified to 5-hydroxylysine: Lys-1093 and Lys-1105. Low complexity predominate over residues 1120–1132 (PGAAGHQGAIGSP). A compositionally biased stretch (pro residues) spans 1180–1192 (PGQPGPPGPPGAP). The propeptide at 1220-1464 (DDPMDFKINT…GVDIGPVCFL (245 aa)) is C-terminal propeptide. Positions 1230-1464 (EEIMSSLKSV…GVDIGPVCFL (235 aa)) constitute a Fibrillar collagen NC1 domain. 3 disulfides stabilise this stretch: Cys-1260-Cys-1292, Cys-1300-Cys-1462, and Cys-1370-Cys-1415. The Ca(2+) site is built by Asp-1278, Asn-1280, Gln-1281, Cys-1283, and Asp-1286.

Belongs to the fibrillar collagen family. As to quaternary structure, trimers of identical alpha 1(III) chains. The chains are linked to each other by interchain disulfide bonds. Trimers are also cross-linked via hydroxylysines. Interacts with ADGRG1. Proline residues at the third position of the tripeptide repeating unit (G-X-Y) are hydroxylated in some or all of the chains. In terms of processing, O-linked glycan consists of a Glc-Gal disaccharide bound to the oxygen atom of a post-translationally added hydroxyl group. In terms of tissue distribution, expressed in embryonic brain, specifically in the meninges, pial basement membrane and blood vessels (at protein level).

It localises to the secreted. Its subcellular location is the extracellular space. It is found in the extracellular matrix. In terms of biological role, collagen type III occurs in most soft connective tissues along with type I collagen. Involved in regulation of cortical development. Is the major ligand of ADGRG1 in the developing brain and binding to ADGRG1 inhibits neuronal migration and activates the RhoA pathway by coupling ADGRG1 to GNA13 and possibly GNA12. The polypeptide is Collagen alpha-1(III) chain (Col3a1) (Mus musculus (Mouse)).